A 502-amino-acid chain; its full sequence is MQVLPQTRVQGVPSGRNLSCSKAVGGTPLRALTRDVVRPARSVNVHVVADGESADDVLLRSSSVAVAEKPKVSGRAFRRSLKDTGRYVAKPINDKDSLDLMEEHGVGYSSVGLVAQMRANNNEWRFKDIRVKLASAYGYCWGVERAVQMAYEAKKKYPDRQIHLTNEIIHNPTVNERMTEMDINIIEQKENGSKDFSKVSRQDVVILPAFGASVQELSLLKDLEVQIVDTTCPWVSKVWTAVDNQARKAHTSVIHGKYSHEETIATASFAETYLIVRDIEEANYVCNYILNGGNKEEFLTKFKNAISKGFDPDRDLARVGLANQTTMLRDETMAIGKLLEKTMIQKHGPAAIKEHFMVMDTICDATQERQDAVYQLVGQQDNPAEKLDLILVVGGFNSSNTSHLQEIPELKNIPSFWVNEAACIDPVNKKITHRTAHGTMLDTQNWLPDGPVTIGVTSGASTPDRAVEEVLEAVFKTRDASFGGIAPNYDLGTAPVVRHEEH.

A chloroplast-targeting transit peptide spans 1–48 (MQVLPQTRVQGVPSGRNLSCSKAVGGTPLRALTRDVVRPARSVNVHVV). Cys-140 lines the [4Fe-4S] cluster pocket. His-170 contacts (2E)-4-hydroxy-3-methylbut-2-enyl diphosphate. A [4Fe-4S] cluster-binding site is contributed by Cys-232. A (2E)-4-hydroxy-3-methylbut-2-enyl diphosphate-binding site is contributed by His-260. Catalysis depends on Glu-262, which acts as the Proton donor. Residue Thr-325 coordinates (2E)-4-hydroxy-3-methylbut-2-enyl diphosphate. [4Fe-4S] cluster is bound at residue Cys-363. Residues 398–400 (SSN) and Ser-461 contribute to the (2E)-4-hydroxy-3-methylbut-2-enyl diphosphate site.

The protein belongs to the IspH family. As to quaternary structure, homodimer. It depends on [4Fe-4S] cluster as a cofactor.

The protein resides in the plastid. The protein localises to the chloroplast stroma. It carries out the reaction dimethylallyl diphosphate + 2 oxidized [2Fe-2S]-[ferredoxin] + H2O = (2E)-4-hydroxy-3-methylbut-2-enyl diphosphate + 2 reduced [2Fe-2S]-[ferredoxin] + 2 H(+). The catalysed reaction is isopentenyl diphosphate + 2 oxidized [2Fe-2S]-[ferredoxin] + H2O = (2E)-4-hydroxy-3-methylbut-2-enyl diphosphate + 2 reduced [2Fe-2S]-[ferredoxin] + 2 H(+). It participates in isoprenoid biosynthesis; dimethylallyl diphosphate biosynthesis; dimethylallyl diphosphate from (2E)-4-hydroxy-3-methylbutenyl diphosphate: step 1/1. The protein operates within isoprenoid biosynthesis; isopentenyl diphosphate biosynthesis via DXP pathway; isopentenyl diphosphate from 1-deoxy-D-xylulose 5-phosphate: step 6/6. Enzyme of the plastid non-mevalonate pathway for isoprenoid biosynthesis that converts 1-hydroxy-2-methyl-2-(E)-butenyl 4-diphosphate into isopentenyl diphosphate (IPP) and dimethylallyl diphosphate (DMAPP). The sequence is that of 4-hydroxy-3-methylbut-2-enyl diphosphate reductase, chloroplastic from Botryococcus braunii (Green alga).